The primary structure comprises 449 residues: Zinc finger and BTB domain-containing protein 14 (449 aa).

Residues 36–102 form the BTB domain; the sequence is CDIAIVVEDV…MYTAKISVKK (67 aa). Lys46 is covalently cross-linked (Glycyl lysine isopeptide (Lys-Gly) (interchain with G-Cter in SUMO2)). Residues 50-66 carry the Nuclear localization signal motif; sequence HRCVLAACSTYFKKLFK. Residues 153 to 194 form a disordered region; that stretch reads GDAADTQDDDVEEIGDQDDSPSDDTVEGTPPSQEDGKSPTTT. The span at 157–178 shows a compositional bias: acidic residues; sequence DTQDDDVEEIGDQDDSPSDDTV. Residues Lys203 and Lys249 each participate in a glycyl lysine isopeptide (Lys-Gly) (interchain with G-Cter in SUMO2) cross-link. 5 consecutive C2H2-type zinc fingers follow at residues 277 to 304, 305 to 332, 333 to 360, 361 to 388, and 389 to 417; these read IACQ…ADRP, FVCE…GYKP, YSCE…NERP, FACH…GEKP, and FVCG…ERKQ.

This sequence belongs to the krueppel C2H2-type zinc-finger protein family. In terms of assembly, interacts with ZBTB21.

The protein resides in the nucleus. Functionally, transcriptional activator of the dopamine transporter (DAT), binding it's promoter at the consensus sequence 5'-CCTGCACAGTTCACGGA-3'. Binds to 5'-d(GCC)(n)-3' trinucleotide repeats in promoter regions and acts as a repressor of the FMR1 gene. Transcriptional repressor of MYC and thymidine kinase promoters. The chain is Zinc finger and BTB domain-containing protein 14 (ZBTB14) from Homo sapiens (Human).